Consider the following 234-residue polypeptide: Ubiquinone biosynthesis O-methyltransferase (234 aa).

Residues Arg39, Gly59, Asp80, and Met124 each contribute to the S-adenosyl-L-methionine site.

Belongs to the methyltransferase superfamily. UbiG/COQ3 family.

The enzyme catalyses a 3-demethylubiquinol + S-adenosyl-L-methionine = a ubiquinol + S-adenosyl-L-homocysteine + H(+). It carries out the reaction a 3-(all-trans-polyprenyl)benzene-1,2-diol + S-adenosyl-L-methionine = a 2-methoxy-6-(all-trans-polyprenyl)phenol + S-adenosyl-L-homocysteine + H(+). The protein operates within cofactor biosynthesis; ubiquinone biosynthesis. Functionally, O-methyltransferase that catalyzes the 2 O-methylation steps in the ubiquinone biosynthetic pathway. This chain is Ubiquinone biosynthesis O-methyltransferase, found in Aliivibrio fischeri (strain ATCC 700601 / ES114) (Vibrio fischeri).